We begin with the raw amino-acid sequence, 488 residues long: Ribulose bisphosphate carboxylase large chain (488 aa).

Substrate is bound by residues asparagine 127 and threonine 177. Residue lysine 179 is the Proton acceptor of the active site. Position 181 (lysine 181) interacts with substrate. Mg(2+) contacts are provided by lysine 205, aspartate 207, and glutamate 208. The residue at position 205 (lysine 205) is an N6-carboxylysine. Catalysis depends on histidine 297, which acts as the Proton acceptor. Substrate is bound by residues arginine 298, histidine 330, and serine 382.

This sequence belongs to the RuBisCO large chain family. Type I subfamily. In terms of assembly, heterohexadecamer of 8 large chains and 8 small chains. The cofactor is Mg(2+).

Its subcellular location is the plastid. It localises to the chloroplast. The enzyme catalyses 2 (2R)-3-phosphoglycerate + 2 H(+) = D-ribulose 1,5-bisphosphate + CO2 + H2O. The catalysed reaction is D-ribulose 1,5-bisphosphate + O2 = 2-phosphoglycolate + (2R)-3-phosphoglycerate + 2 H(+). Its function is as follows. RuBisCO catalyzes two reactions: the carboxylation of D-ribulose 1,5-bisphosphate, the primary event in carbon dioxide fixation, as well as the oxidative fragmentation of the pentose substrate in the photorespiration process. Both reactions occur simultaneously and in competition at the same active site. The chain is Ribulose bisphosphate carboxylase large chain from Pylaiella littoralis (Seaweed).